The primary structure comprises 377 residues: Nitric oxide reductase FlRd-NAD(+) reductase (377 aa).

The protein belongs to the FAD-dependent oxidoreductase family. It depends on FAD as a cofactor.

It is found in the cytoplasm. It carries out the reaction 2 reduced [nitric oxide reductase rubredoxin domain] + NAD(+) + H(+) = 2 oxidized [nitric oxide reductase rubredoxin domain] + NADH. Its pathway is nitrogen metabolism; nitric oxide reduction. In terms of biological role, one of at least two accessory proteins for anaerobic nitric oxide (NO) reductase. Reduces the rubredoxin moiety of NO reductase. This Escherichia coli (strain K12 / MC4100 / BW2952) protein is Nitric oxide reductase FlRd-NAD(+) reductase.